The sequence spans 397 residues: Phosphoglycerate kinase (397 aa).

Substrate contacts are provided by residues 22-24 (DYN), Arg38, 61-64 (HLGR), Arg119, and Arg152. ATP-binding positions include Lys203, Gly294, Glu325, and 351-354 (GGDT).

This sequence belongs to the phosphoglycerate kinase family. In terms of assembly, monomer.

The protein localises to the cytoplasm. It catalyses the reaction (2R)-3-phosphoglycerate + ATP = (2R)-3-phospho-glyceroyl phosphate + ADP. It functions in the pathway carbohydrate degradation; glycolysis; pyruvate from D-glyceraldehyde 3-phosphate: step 2/5. The protein is Phosphoglycerate kinase (pgk) of Aquifex aeolicus (strain VF5).